The chain runs to 481 residues: ATP synthase subunit beta, plastid (481 aa).

ATP is bound at residue 162-169 (GGAGVGKT).

The protein belongs to the ATPase alpha/beta chains family. As to quaternary structure, F-type ATPases have 2 components, CF(1) - the catalytic core - and CF(0) - the membrane proton channel. CF(1) has five subunits: alpha(3), beta(3), gamma(1), delta(1), epsilon(1). CF(0) has four main subunits: a(1), b(1), b'(1) and c(9-12).

The protein localises to the plastid membrane. The catalysed reaction is ATP + H2O + 4 H(+)(in) = ADP + phosphate + 5 H(+)(out). Its function is as follows. Produces ATP from ADP in the presence of a proton gradient across the membrane. The catalytic sites are hosted primarily by the beta subunits. The polypeptide is ATP synthase subunit beta, plastid (atpB) (Prototheca wickerhamii).